A 277-amino-acid polypeptide reads, in one-letter code: Formamidopyrimidine-DNA glycosylase (277 aa).

Pro-2 acts as the Schiff-base intermediate with DNA in catalysis. Glu-3 acts as the Proton donor in catalysis. Lys-58 serves as the catalytic Proton donor; for beta-elimination activity. The DNA site is built by His-95, Arg-113, and Arg-158. An FPG-type zinc finger spans residues 243 to 277 (GVYDRANQPCLRCGGVVRQIRQAGRSTYYCTGCQH). The active-site Proton donor; for delta-elimination activity is Arg-267.

Belongs to the FPG family. In terms of assembly, monomer. Zn(2+) serves as cofactor.

It carries out the reaction Hydrolysis of DNA containing ring-opened 7-methylguanine residues, releasing 2,6-diamino-4-hydroxy-5-(N-methyl)formamidopyrimidine.. The catalysed reaction is 2'-deoxyribonucleotide-(2'-deoxyribose 5'-phosphate)-2'-deoxyribonucleotide-DNA = a 3'-end 2'-deoxyribonucleotide-(2,3-dehydro-2,3-deoxyribose 5'-phosphate)-DNA + a 5'-end 5'-phospho-2'-deoxyribonucleoside-DNA + H(+). Involved in base excision repair of DNA damaged by oxidation or by mutagenic agents. Acts as a DNA glycosylase that recognizes and removes damaged bases. Has a preference for oxidized purines, such as 7,8-dihydro-8-oxoguanine (8-oxoG). Has AP (apurinic/apyrimidinic) lyase activity and introduces nicks in the DNA strand. Cleaves the DNA backbone by beta-delta elimination to generate a single-strand break at the site of the removed base with both 3'- and 5'-phosphates. The protein is Formamidopyrimidine-DNA glycosylase of Dechloromonas aromatica (strain RCB).